A 993-amino-acid chain; its full sequence is Glycine dehydrogenase (decarboxylating) (993 aa).

Lysine 715 is modified (N6-(pyridoxal phosphate)lysine).

This sequence belongs to the GcvP family. The glycine cleavage system is composed of four proteins: P, T, L and H. The cofactor is pyridoxal 5'-phosphate.

It catalyses the reaction N(6)-[(R)-lipoyl]-L-lysyl-[glycine-cleavage complex H protein] + glycine + H(+) = N(6)-[(R)-S(8)-aminomethyldihydrolipoyl]-L-lysyl-[glycine-cleavage complex H protein] + CO2. Functionally, the glycine cleavage system catalyzes the degradation of glycine. The P protein binds the alpha-amino group of glycine through its pyridoxal phosphate cofactor; CO(2) is released and the remaining methylamine moiety is then transferred to the lipoamide cofactor of the H protein. In Xylella fastidiosa (strain Temecula1 / ATCC 700964), this protein is Glycine dehydrogenase (decarboxylating).